A 310-amino-acid polypeptide reads, in one-letter code: Putrescinyltransferase (310 aa).

Belongs to the thymidine aminotransferase family.

The catalysed reaction is 5-phosphomethyl-dUMP in DNA + putrescine = 5-N(alpha)-putrescinyl-dTMP in DNA + phosphate. Transfers putrescine to 5-phosphomethyl-2'-deoxyuridine (5-PmdU) to produce 5-Nalpha-putrescinylthymidine (Nalpha-PutT) as a step in the pathway leading to thymidine hypermodifications in the viral genome. As a final result of the pathway of hypermodification, Nalpha-PutT substitutes for about 50% of thymidines in the viral DNA. These modifications probably prevent degradation of viral genome by the host restriction-modification antiviral defense system. The protein is Putrescinyltransferase of Delftia phage PhiW-14 (Deftia acidovorans bacteriophage phiW-14).